Reading from the N-terminus, the 196-residue chain is Carnitine operon protein CaiE (196 aa).

A disordered region spans residues 173-196 (TQPLRQMEENRPRLQGTTDVTPKR). Positions 187–196 (QGTTDVTPKR) are enriched in polar residues.

It belongs to the transferase hexapeptide repeat family.

It functions in the pathway amine and polyamine metabolism; carnitine metabolism. Functionally, overproduction of CaiE stimulates the activity of CaiB and CaiD. The protein is Carnitine operon protein CaiE of Shigella dysenteriae serotype 1 (strain Sd197).